A 602-amino-acid chain; its full sequence is RNA-binding NOB1-like protein (602 aa).

The segment at 1–25 (MDPKPTSMWSSIVKKDPPSKPPVND) is disordered. One can recognise a PINc domain in the interval 48 to 134 (VVDANAIIEG…LKLIALSYTL (87 aa)). Disordered stretches follow at residues 258 to 278 (SQGQ…VSRS) and 301 to 331 (IQKD…GEDI). Basic and acidic residues predominate over residues 301-329 (IQKDQEADKARHTKEANETHAKDSGKNGE). A coiled-coil region spans residues 331–365 (ISSILKDMRLEEESLRALQEETEETNAEATLINGE). The segment at 452 to 522 (IRQLHRWILK…QYSIPMPKGG (71 aa)) adopts an NOB1 zinc-finger fold. 4 residues coordinate Zn(2+): C462, C465, C477, and C480.

It belongs to the NOB1 family. Component of the small ribosomal subunit, ribosomal RNA processing complex (SSU RRP complex). Highly expressed in flowers and siliques and at lower levels in roots, hypocotyls, stems, leaves and seeds.

It is found in the nucleus. The protein resides in the nucleoplasm. Its subcellular location is the cytoplasm. Functionally, essential protein required during embryogenesis and pollen development. Endonuclease cleaving pre-rRNA at the 3' end of the mature 18S rRNA (D-site); cleaves 20S pre-rRNA in the cytoplasm. Required for processing of 20S pre-rRNA precursor and biogenesis of 40S ribosomal subunits. This is RNA-binding NOB1-like protein from Arabidopsis thaliana (Mouse-ear cress).